Consider the following 338-residue polypeptide: Holliday junction branch migration complex subunit RuvB (338 aa).

The span at 1 to 14 (MENDHGILSDHPSG) shows a compositional bias: basic and acidic residues. The segment at 1–21 (MENDHGILSDHPSGEEESQVE) is disordered. The large ATPase domain (RuvB-L) stretch occupies residues 3–185 (NDHGILSDHP…FGIVEHMNYY (183 aa)). Residues L24, R25, G66, K69, T70, T71, 132 to 134 (EDY), R175, Y185, and R222 each bind ATP. T70 lines the Mg(2+) pocket. Residues 186-256 (TQDELTKIIF…IVKQALSLLQ (71 aa)) form a small ATPAse domain (RuvB-S) region. Residues 259–338 (DRGLDEIDRK…LGIEYPTDKN (80 aa)) form a head domain (RuvB-H) region. DNA is bound by residues R314 and R319.

It belongs to the RuvB family. Homohexamer. Forms an RuvA(8)-RuvB(12)-Holliday junction (HJ) complex. HJ DNA is sandwiched between 2 RuvA tetramers; dsDNA enters through RuvA and exits via RuvB. An RuvB hexamer assembles on each DNA strand where it exits the tetramer. Each RuvB hexamer is contacted by two RuvA subunits (via domain III) on 2 adjacent RuvB subunits; this complex drives branch migration. In the full resolvosome a probable DNA-RuvA(4)-RuvB(12)-RuvC(2) complex forms which resolves the HJ.

The protein resides in the cytoplasm. It carries out the reaction ATP + H2O = ADP + phosphate + H(+). The RuvA-RuvB-RuvC complex processes Holliday junction (HJ) DNA during genetic recombination and DNA repair, while the RuvA-RuvB complex plays an important role in the rescue of blocked DNA replication forks via replication fork reversal (RFR). RuvA specifically binds to HJ cruciform DNA, conferring on it an open structure. The RuvB hexamer acts as an ATP-dependent pump, pulling dsDNA into and through the RuvAB complex. RuvB forms 2 homohexamers on either side of HJ DNA bound by 1 or 2 RuvA tetramers; 4 subunits per hexamer contact DNA at a time. Coordinated motions by a converter formed by DNA-disengaged RuvB subunits stimulates ATP hydrolysis and nucleotide exchange. Immobilization of the converter enables RuvB to convert the ATP-contained energy into a lever motion, pulling 2 nucleotides of DNA out of the RuvA tetramer per ATP hydrolyzed, thus driving DNA branch migration. The RuvB motors rotate together with the DNA substrate, which together with the progressing nucleotide cycle form the mechanistic basis for DNA recombination by continuous HJ branch migration. Branch migration allows RuvC to scan DNA until it finds its consensus sequence, where it cleaves and resolves cruciform DNA. This chain is Holliday junction branch migration complex subunit RuvB, found in Limosilactobacillus reuteri (strain DSM 20016) (Lactobacillus reuteri).